The sequence spans 239 residues: 1-(5-phosphoribosyl)-5-[(5-phosphoribosylamino)methylideneamino] imidazole-4-carboxamide isomerase (239 aa).

The active-site Proton acceptor is the Asp9. Asp131 (proton donor) is an active-site residue.

The protein belongs to the HisA/HisF family.

The protein localises to the cytoplasm. It catalyses the reaction 1-(5-phospho-beta-D-ribosyl)-5-[(5-phospho-beta-D-ribosylamino)methylideneamino]imidazole-4-carboxamide = 5-[(5-phospho-1-deoxy-D-ribulos-1-ylimino)methylamino]-1-(5-phospho-beta-D-ribosyl)imidazole-4-carboxamide. It participates in amino-acid biosynthesis; L-histidine biosynthesis; L-histidine from 5-phospho-alpha-D-ribose 1-diphosphate: step 4/9. This is 1-(5-phosphoribosyl)-5-[(5-phosphoribosylamino)methylideneamino] imidazole-4-carboxamide isomerase from Parabacteroides distasonis (strain ATCC 8503 / DSM 20701 / CIP 104284 / JCM 5825 / NCTC 11152).